The chain runs to 271 residues: Putative phosphoenolpyruvate synthase regulatory protein (271 aa).

Residue 151–158 participates in ADP binding; the sequence is GVSRSGKT.

This sequence belongs to the pyruvate, phosphate/water dikinase regulatory protein family. PSRP subfamily.

It catalyses the reaction [pyruvate, water dikinase] + ADP = [pyruvate, water dikinase]-phosphate + AMP + H(+). The catalysed reaction is [pyruvate, water dikinase]-phosphate + phosphate + H(+) = [pyruvate, water dikinase] + diphosphate. Bifunctional serine/threonine kinase and phosphorylase involved in the regulation of the phosphoenolpyruvate synthase (PEPS) by catalyzing its phosphorylation/dephosphorylation. This is Putative phosphoenolpyruvate synthase regulatory protein from Paraburkholderia xenovorans (strain LB400).